The chain runs to 134 residues: Cytochrome b5 isoform B (134 aa).

One can recognise a Cytochrome b5 heme-binding domain in the interval 5-81; that stretch reads AKIFTLSEVS…MEQYYVGEID (77 aa). The heme site is built by H40 and H64. A helical transmembrane segment spans residues 107-127; the sequence is FIIKLLQFLVPLAILGLAVGI.

This sequence belongs to the cytochrome b5 family. In terms of assembly, interacts with CER1, FAH1, FAH2 and BI-1.

Its subcellular location is the endoplasmic reticulum membrane. Its function is as follows. Membrane bound hemoprotein which function as an electron carrier for several membrane bound oxygenases, including fatty acid desaturases. This is Cytochrome b5 isoform B from Arabidopsis thaliana (Mouse-ear cress).